A 161-amino-acid polypeptide reads, in one-letter code: Peptidyl-prolyl cis-trans isomerase-like 1 (161 aa).

Residues 1–155 form the PPIase cyclophilin-type domain; sequence MATDVVFDTS…DEVKIIRAKV (155 aa).

This sequence belongs to the cyclophilin-type PPIase family. PPIL1 subfamily.

The enzyme catalyses [protein]-peptidylproline (omega=180) = [protein]-peptidylproline (omega=0). Functionally, PPIases accelerate the folding of proteins. It catalyzes the cis-trans isomerization of proline imidic peptide bonds in oligopeptides. The protein is Peptidyl-prolyl cis-trans isomerase-like 1 (cyp1) of Aspergillus fumigatus (strain ATCC MYA-4609 / CBS 101355 / FGSC A1100 / Af293) (Neosartorya fumigata).